A 505-amino-acid polypeptide reads, in one-letter code: MSGIDFKQKISVQRPFGKPSSAEDEYEITRVFESDRGRIVNSAAIRRLQQKTQVFPLERNAAVRSRLTHSLEVQQVGRYIAKEILNRFKQDKKISAYGLDKLLDPFESIVEMACLMHDIGNPPFGHFGESAINNWFTKQMDPNGGGAEPRGKDQCLVNTLKLREGETELNILRSKIRQDLSHFEGNAQAIRLVYSLLKLNLTYAQVGCILKYTKPAYWSGDIPTSHNYLMKKPGFYLAEEEYVKDLRRELNMGEFNRFPLTYIMEAADDISYCIADLEDAVEKNIFSVEQLYDHMVQEWGETTHGDLFDKVVGGAFRQLGRGQGRRSSEDQFFMYLRVNTVGKLVPHAAQRFIENLPAVFSGSFNQALLEDSSPACKLLQIFKKVAVKHVFNYPEVEQLELQGYRVISGLLDIYSPLLAMPQTAFTQLVAEDSHREYPIETRLFHKLSTKHRLAYAESTERLRHLSPEQHEIYEYYYRARLIQDYISGMTDLYAYDEYRRLMAAE.

The region spanning 66–273 (RLTHSLEVQQ…MEAADDISYC (208 aa)) is the HD domain.

It belongs to the dGTPase family. Type 1 subfamily. As to quaternary structure, homotetramer. The cofactor is Mg(2+).

It carries out the reaction dGTP + H2O = 2'-deoxyguanosine + triphosphate + H(+). Its function is as follows. dGTPase preferentially hydrolyzes dGTP over the other canonical NTPs. This chain is Deoxyguanosinetriphosphate triphosphohydrolase, found in Yersinia enterocolitica serotype O:8 / biotype 1B (strain NCTC 13174 / 8081).